The primary structure comprises 1085 residues: Carbamoyl phosphate synthase large chain (1085 aa).

The interval 1-399 (MPKRTDISNI…ALQKALCSLE (399 aa)) is carboxyphosphate synthetic domain. ATP contacts are provided by Arg127, Arg167, Gly174, Glu206, Leu208, Glu213, Gly239, Val240, His241, Gln283, and Glu297. Residues 131–326 (KEAMLKIGMD…IAKVATMLAV (196 aa)) enclose the ATP-grasp 1 domain. Gln283, Glu297, and Asn299 together coordinate Mg(2+). Residues Gln283, Glu297, and Asn299 each coordinate Mn(2+). The oligomerization domain stretch occupies residues 400-552 (NNWLGFESLS…APNPLPPIEN (153 aa)). The segment at 553 to 951 (KQEKKEKKIL…AFFKAQTACF (399 aa)) is carbamoyl phosphate synthetic domain. Positions 678–871 (SLFLKELDIK…LAKVATRVMV (194 aa)) constitute an ATP-grasp 2 domain. ATP is bound by residues Arg714, Lys756, Leu758, Glu763, Gly788, Ile789, His790, Ser791, Gln830, and Glu842. Mg(2+) is bound by residues Gln830, Glu842, and Asn844. Mn(2+) is bound by residues Gln830, Glu842, and Asn844. Residues 952–1085 (NPIKNKGLIF…ELLALQDYLK (134 aa)) enclose the MGS-like domain. Residues 952–1085 (NPIKNKGLIF…ELLALQDYLK (134 aa)) form an allosteric domain region.

It belongs to the CarB family. As to quaternary structure, composed of two chains; the small (or glutamine) chain promotes the hydrolysis of glutamine to ammonia, which is used by the large (or ammonia) chain to synthesize carbamoyl phosphate. Tetramer of heterodimers (alpha,beta)4. Mg(2+) is required as a cofactor. It depends on Mn(2+) as a cofactor.

The catalysed reaction is hydrogencarbonate + L-glutamine + 2 ATP + H2O = carbamoyl phosphate + L-glutamate + 2 ADP + phosphate + 2 H(+). It carries out the reaction hydrogencarbonate + NH4(+) + 2 ATP = carbamoyl phosphate + 2 ADP + phosphate + 2 H(+). It participates in amino-acid biosynthesis; L-arginine biosynthesis; carbamoyl phosphate from bicarbonate: step 1/1. It functions in the pathway pyrimidine metabolism; UMP biosynthesis via de novo pathway; (S)-dihydroorotate from bicarbonate: step 1/3. In terms of biological role, large subunit of the glutamine-dependent carbamoyl phosphate synthetase (CPSase). CPSase catalyzes the formation of carbamoyl phosphate from the ammonia moiety of glutamine, carbonate, and phosphate donated by ATP, constituting the first step of 2 biosynthetic pathways, one leading to arginine and/or urea and the other to pyrimidine nucleotides. The large subunit (synthetase) binds the substrates ammonia (free or transferred from glutamine from the small subunit), hydrogencarbonate and ATP and carries out an ATP-coupled ligase reaction, activating hydrogencarbonate by forming carboxy phosphate which reacts with ammonia to form carbamoyl phosphate. This is Carbamoyl phosphate synthase large chain from Helicobacter pylori (strain ATCC 700392 / 26695) (Campylobacter pylori).